Reading from the N-terminus, the 665-residue chain is Succinate dehydrogenase [ubiquinone] flavoprotein subunit A, mitochondrial (665 aa).

Residues 1-45 (MALLKVAPSRLLSRALQLASRVQNCTPTVTTARRNFHFTVYGRKD) constitute a mitochondrion transit peptide. 5 residues coordinate FAD: A72, A75, T94, K95, and S101. The residue at position 102 (H102) is a Tele-8alpha-FAD histidine. 4 residues coordinate FAD: T103, G108, A224, and D278. Residues H299, R343, and H410 each contribute to the oxaloacetate site. R343 acts as the Proton acceptor in catalysis. E443 provides a ligand contact to FAD. Oxaloacetate contacts are provided by R454 and A457. FAD contacts are provided by S459 and L460.

This sequence belongs to the FAD-dependent oxidoreductase 2 family. FRD/SDH subfamily. Component of complex II composed of four subunits: a flavoprotein (FP), an iron-sulfur protein (IP), and a cytochrome b composed of a large and a small subunit. The cofactor is FAD.

It is found in the mitochondrion inner membrane. It carries out the reaction a ubiquinone + succinate = a ubiquinol + fumarate. The enzyme catalyses (R)-malate + a quinone = enol-oxaloacetate + a quinol. The catalysed reaction is (S)-malate + a quinone = enol-oxaloacetate + a quinol. It functions in the pathway carbohydrate metabolism; tricarboxylic acid cycle; fumarate from succinate (eukaryal route): step 1/1. Its activity is regulated as follows. Enol-oxaloacetate inhibits the succinate dehydrogenase activity. Its function is as follows. Flavoprotein (FP) subunit of succinate dehydrogenase (SDH) that is involved in complex II of the mitochondrial electron transport chain and is responsible for transferring electrons from succinate to ubiquinone (coenzyme Q). SDH also oxidizes malate to the non-canonical enol form of oxaloacetate, enol-oxaloacetate. Enol-oxaloacetate, which is a potent inhibitor of the succinate dehydrogenase activity, is further isomerized into keto-oxaloacetate. This Xenopus laevis (African clawed frog) protein is Succinate dehydrogenase [ubiquinone] flavoprotein subunit A, mitochondrial (sdha-a).